A 420-amino-acid polypeptide reads, in one-letter code: Histidine--tRNA ligase (420 aa).

Belongs to the class-II aminoacyl-tRNA synthetase family. As to quaternary structure, homodimer.

Its subcellular location is the cytoplasm. The catalysed reaction is tRNA(His) + L-histidine + ATP = L-histidyl-tRNA(His) + AMP + diphosphate + H(+). The chain is Histidine--tRNA ligase from Staphylococcus saprophyticus subsp. saprophyticus (strain ATCC 15305 / DSM 20229 / NCIMB 8711 / NCTC 7292 / S-41).